The following is a 444-amino-acid chain: MRNIIYFILSLLFSVTSYALETINIEHGRADPTPIAVNKFDADNSAADVLGHDMVKVISNDLKLSGLFRPISAASFIEEKTGIEYKPLFAAWRQINASLLVNGEVKKLESGKFKVSFILWDTLLEKQLAGEMLEVPKNLWRRAAHKIADKIYEKITGDAGYFDTKIVYVSESSSLPKIKRIALMDYDGANNKYLTNGKSLVLTPRFARSADKIFYVSYATKRRVLVYEKDLKTGKESVVGDFPGISFAPRFSPDGRKAVMSIAKNGSTHIYEIDLATKQLHKLTDGFGINTSPSYSPDGKKIVYNSDRNGVPQLYIMNSDGSDVQRISFGGGSYAAPSWSPRGDYIAFTKITKGDGGKTFNIGIMKACPQDDENSERIITSGYLVESPCWSPNGRVIMFAKGWPSSAKAPGKNKIFAIDLTGHNEREIMTPADASDPEWSGVLN.

A signal peptide spans 1-19 (MRNIIYFILSLLFSVTSYA).

The protein belongs to the TolB family. In terms of assembly, the Tol-Pal system is composed of five core proteins: the inner membrane proteins TolA, TolQ and TolR, the periplasmic protein TolB and the outer membrane protein Pal. They form a network linking the inner and outer membranes and the peptidoglycan layer.

The protein localises to the periplasm. Part of the Tol-Pal system, which plays a role in outer membrane invagination during cell division and is important for maintaining outer membrane integrity. The chain is Tol-Pal system protein TolB from Rickettsia conorii (strain ATCC VR-613 / Malish 7).